The primary structure comprises 102 residues: MFLTAVLLRGRIPGRQWIGKHRRPRTVSFQAKESMIRRLEVEAENHYWLSMPYMTAEQECGHAAERRAQAFEAIKAAATSKFPKHRYIADQLDHLNISKKWS.

Belongs to the mitochondrion-specific ribosomal protein mL63 family.

It is found in the mitochondrion. This is Large ribosomal subunit protein mL63 (Mrpl57) from Mus musculus (Mouse).